Reading from the N-terminus, the 338-residue chain is Glyceraldehyde-3-phosphate dehydrogenase GAPC2, cytosolic (338 aa).

Residues 15–16 (RI), Asp37, and Arg84 each bind NAD(+). Residue 155–157 (SCT) participates in D-glyceraldehyde 3-phosphate binding. Cys156 acts as the Nucleophile in catalysis. At Cys156 the chain carries S-glutathionyl cysteine; transient; alternate. Cys156 carries the S-nitrosocysteine; transient; alternate modification. Cys160 is modified (S-nitrosocysteine; transient). Residues Thr186, 215–216 (TG), and Arg238 each bind D-glyceraldehyde 3-phosphate. An NAD(+)-binding site is contributed by Asn320.

The protein belongs to the glyceraldehyde-3-phosphate dehydrogenase family. Homotetramer. Interacts with PLDDELTA. Binds to DPB3-1/NF-YC10 in response to heat-stress; this interaction promotes DPB3-1/NF-YC10 DNA-binding ability to its target promoter. S-glutathionylation at Cys-156 in the presence of oxidized glutathione (GSSG). S-nitrosylation at Cys-156 and Cys-160 in the presence of S-nitrosoglutathione (GSNO) or sodium nitroprusside (SNP). These reactions may be both a protective mechanism against irreversible oxidation and a mean to store inhibited enzyme in a recoverable form.

It is found in the cytoplasm. The protein resides in the nucleus. The enzyme catalyses D-glyceraldehyde 3-phosphate + phosphate + NAD(+) = (2R)-3-phospho-glyceroyl phosphate + NADH + H(+). It participates in carbohydrate degradation; glycolysis; pyruvate from D-glyceraldehyde 3-phosphate: step 1/5. With respect to regulation, inhibition by oxidized glutathione (GSSG), S-nitrosoglutathione (GSNO) and hydrogen peroxide. Functionally, key enzyme in glycolysis that catalyzes the first step of the pathway by converting D-glyceraldehyde 3-phosphate (G3P) into 3-phospho-D-glyceroyl phosphate. Essential for the maintenance of cellular ATP levels and carbohydrate metabolism. Binds DNA in vitro. Together with DNA polymerase II subunit B3-1 (DPB3-1) and GAPC1, enhances heat tolerance and promotes the expression of heat-inducible genes. The sequence is that of Glyceraldehyde-3-phosphate dehydrogenase GAPC2, cytosolic from Arabidopsis thaliana (Mouse-ear cress).